Here is a 419-residue protein sequence, read N- to C-terminus: UDP-N-acetylglucosamine 1-carboxyvinyltransferase (419 aa).

Residue 22-23 coordinates phosphoenolpyruvate; sequence KN. Residue Arg91 coordinates UDP-N-acetyl-alpha-D-glucosamine. The active-site Proton donor is Cys115. The residue at position 115 (Cys115) is a 2-(S-cysteinyl)pyruvic acid O-phosphothioketal. Residues 120–124, 160–163, Asp305, and Val327 contribute to the UDP-N-acetyl-alpha-D-glucosamine site; these read RPVDL and KVSV.

This sequence belongs to the EPSP synthase family. MurA subfamily.

Its subcellular location is the cytoplasm. The catalysed reaction is phosphoenolpyruvate + UDP-N-acetyl-alpha-D-glucosamine = UDP-N-acetyl-3-O-(1-carboxyvinyl)-alpha-D-glucosamine + phosphate. It participates in cell wall biogenesis; peptidoglycan biosynthesis. In terms of biological role, cell wall formation. Adds enolpyruvyl to UDP-N-acetylglucosamine. The protein is UDP-N-acetylglucosamine 1-carboxyvinyltransferase of Salmonella schwarzengrund (strain CVM19633).